The chain runs to 497 residues: Glycerol kinase (497 aa).

Residue T11 coordinates ADP. ATP contacts are provided by T11, S12, and S13. T11 serves as a coordination point for sn-glycerol 3-phosphate. Residue R15 coordinates ADP. Sn-glycerol 3-phosphate-binding residues include R81, E82, Y133, and D242. Residues R81, E82, Y133, D242, and Q243 each contribute to the glycerol site. Residues T264 and G307 each coordinate ADP. The ATP site is built by T264, G307, Q311, and G412. ADP-binding residues include G412 and N416.

Belongs to the FGGY kinase family.

It catalyses the reaction glycerol + ATP = sn-glycerol 3-phosphate + ADP + H(+). Its pathway is polyol metabolism; glycerol degradation via glycerol kinase pathway; sn-glycerol 3-phosphate from glycerol: step 1/1. Inhibited by fructose 1,6-bisphosphate (FBP). In terms of biological role, key enzyme in the regulation of glycerol uptake and metabolism. Catalyzes the phosphorylation of glycerol to yield sn-glycerol 3-phosphate. In Leptothrix cholodnii (strain ATCC 51168 / LMG 8142 / SP-6) (Leptothrix discophora (strain SP-6)), this protein is Glycerol kinase.